We begin with the raw amino-acid sequence, 368 residues long: Probable multidrug ABC transporter permease YbhR (368 aa).

The Cytoplasmic portion of the chain corresponds to 1–24 (MFHRLWTLIRKELQSLLREPQTRA). A helical transmembrane segment spans residues 25-45 (ILILPVLIQVILFPFAATLEV). Topologically, residues 46–173 (TNATIAIYDE…WYNPNLDYKW (128 aa)) are periplasmic. Residues 129–366 (AQIAANYLQQ…SAAYAMFRRK (238 aa)) enclose the ABC transmembrane type-2 domain. The helical transmembrane segment at 174–194 (FVVPSLIAMITTIGVMIVTSL) threads the bilayer. The Cytoplasmic segment spans residues 195 to 222 (SVAREREQGTLDQLLVSPLTTWQIFIGK). The chain crosses the membrane as a helical span at residues 223-243 (AVPALIVATFQATIVLAIGIW). Residues 244–253 (AYQIPFAGSL) are Periplasmic-facing. Residues 254-274 (ALFYFTMVIYGLSLVGFGLLI) traverse the membrane as a helical segment. Residues 275 to 284 (SSLCSTQQQA) lie on the Cytoplasmic side of the membrane. Residues 285 to 305 (FIGVFVFMMPAILLSGYVSPV) form a helical membrane-spanning segment. The Periplasmic portion of the chain corresponds to 306–339 (ENMPVWLQNLTWINPIRHFTDITKQIYLKDASLD). Residues 340 to 360 (IVWNSLWPLLVITATTGSAAY) traverse the membrane as a helical segment. The Cytoplasmic segment spans residues 361–368 (AMFRRKVM).

It belongs to the ABC-2 integral membrane protein family. The complex is probably composed of two ATP-binding proteins (YbhF) and two transmembrane proteins (YbhR and YbhS).

The protein localises to the cell inner membrane. Part of the ABC transporter complex YbhFSR that could be involved in efflux of cefoperazone. Probably involved in the translocation of the substrate across the membrane. In Escherichia coli O157:H7, this protein is Probable multidrug ABC transporter permease YbhR (ybhR).